Reading from the N-terminus, the 295-residue chain is MQVFTGTDKVKRGLAQMLKGGVIMDVTNAEQAEIAEEAGAVAVMALERVPADIRAEGGVARMADPKKIKEIMSAVSIPVMAKVRIGHFVEAQILEALGVDFIDESEVLTPADEKYHINKHAFKVPFVCGARDLGEALRRIAEGAAMIRTKGEAGTGNVVEAVRHMRQIMDEIRSLVLLPDEELVAKAKELGAPLDLIIETKKLGRLPVVNFAAGGIATPADAALMMHLGADGVFVGSGIFKSKNPRKRARAIVLAVTYYDDPYVLAEISEDLGEPMPGIDVRKLSESELLQVRGW.

Position 25 (Asp-25) interacts with D-ribose 5-phosphate. Lys-82 serves as the catalytic Schiff-base intermediate with D-ribose 5-phosphate. Gly-154 contacts D-ribose 5-phosphate. Residue Arg-166 participates in D-glyceraldehyde 3-phosphate binding. Residues Gly-215 and 236–237 (GS) each bind D-ribose 5-phosphate.

This sequence belongs to the PdxS/SNZ family. As to quaternary structure, in the presence of PdxT, forms a dodecamer of heterodimers.

The catalysed reaction is aldehydo-D-ribose 5-phosphate + D-glyceraldehyde 3-phosphate + L-glutamine = pyridoxal 5'-phosphate + L-glutamate + phosphate + 3 H2O + H(+). It functions in the pathway cofactor biosynthesis; pyridoxal 5'-phosphate biosynthesis. In terms of biological role, catalyzes the formation of pyridoxal 5'-phosphate from ribose 5-phosphate (RBP), glyceraldehyde 3-phosphate (G3P) and ammonia. The ammonia is provided by the PdxT subunit. Can also use ribulose 5-phosphate and dihydroxyacetone phosphate as substrates, resulting from enzyme-catalyzed isomerization of RBP and G3P, respectively. The chain is Pyridoxal 5'-phosphate synthase subunit PdxS from Dictyoglomus turgidum (strain DSM 6724 / Z-1310).